A 1289-amino-acid chain; its full sequence is Pesticidal crystal protein Cry5Ab (1289 aa).

The tract at residues 1263–1289 (PLPTDDQNSEGNTASSTNSDTSMNNNQ) is disordered. Positions 1274 to 1289 (NTASSTNSDTSMNNNQ) are enriched in low complexity.

The protein belongs to the delta endotoxin family.

Its function is as follows. Endotoxin with nematicidal activity. In Bacillus thuringiensis subsp. darmstadiensis, this protein is Pesticidal crystal protein Cry5Ab (cry5Ab).